The sequence spans 334 residues: Trans-O-hydroxybenzylidenepyruvate hydratase-aldolase (334 aa).

This sequence belongs to the DapA family.

It carries out the reaction (3E)-4-(2-hydroxyphenyl)-2-oxobut-3-enoate + H2O = salicylaldehyde + pyruvate. Its pathway is aromatic compound metabolism; naphthalene degradation. Involved in the naphthalene upper catabolic pathway. Catalyzes the transformation of trans-O-hydroxybenzylidenepyruvate (THBPA) to salicylaldehyde and pyruvate. The reaction is reversible. This is Trans-O-hydroxybenzylidenepyruvate hydratase-aldolase (pahE) from Pseudomonas aeruginosa.